Reading from the N-terminus, the 216-residue chain is MVSFSSLFVAACAAVTAFALPNELEKRAITSNEQGTNNGYFYSFWTNGGGSVSYNNGAAGQYSVNWKDCGSFTSGKGWATGSARNINFSGSFNPSGNAYLAVYGWTTSPLVEYYIMENYGEYNPGSSMAHKGTVTSDGSVYDIYAHQQVNQPSIVGTATFNQYWSIRRNKRSSGTVTTANHFNAWSRLGMGLGSHNYQIVNTEGYQSSGSASITVS.

The first 27 residues, 1-27 (MVSFSSLFVAACAAVTAFALPNELEKR), serve as a signal peptide directing secretion. Positions 28-216 (AITSNEQGTN…SSGSASITVS (189 aa)) constitute a GH11 domain. Asparagine 87 carries an N-linked (GlcNAc...) asparagine glycan. Residue glutamate 112 is the Nucleophile of the active site. Glutamate 203 acts as the Proton donor in catalysis.

The protein belongs to the glycosyl hydrolase 11 (cellulase G) family.

It localises to the secreted. The enzyme catalyses Endohydrolysis of (1-&gt;4)-beta-D-xylosidic linkages in xylans.. It functions in the pathway glycan degradation; xylan degradation. In terms of biological role, endo-1,4-beta-xylanase involved in the hydrolysis of xylan, a major structural heterogeneous polysaccharide found in plant biomass representing the second most abundant polysaccharide in the biosphere, after cellulose. The chain is Endo-1,4-beta-xylanase 2 (xyn2) from Rhizopus oryzae (Mucormycosis agent).